The primary structure comprises 188 residues: Pallidipin (188 aa).

Residues 1–18 (MKVIIAATLLGILMHAFA) form the signal peptide. Intrachain disulfides connect cysteine 21–cysteine 137, cysteine 55–cysteine 184, and cysteine 89–cysteine 105.

It belongs to the calycin superfamily. Triabin family. Expressed in salivary glands.

Its subcellular location is the secreted. Its function is as follows. Has been described as a specific inhibitor of collagen-induced platelet aggregation. However, as it does not affect platelet shape change or adhesion, it is plausible that it exerts its antiplatelet activity by a mechanism similar to that of triplatin, moubatin and dipetalodipin as scavenging eicosanoids involved in inflammation such as thromboxane A2 (TXA2). The chain is Pallidipin from Meccus pallidipennis (Triatomine bug).